The sequence spans 123 residues: NADH-quinone oxidoreductase subunit A (123 aa).

3 consecutive transmembrane segments (helical) span residues 11 to 31 (FPVLMFLLVGTGLGVALVSIG), 67 to 87 (LVAILFIIFDLETAFLFPWGV), and 92 to 112 (IGWPGFISMMIFLLEFLLGFA).

Belongs to the complex I subunit 3 family. NDH-1 is composed of 14 different subunits. Subunits NuoA, H, J, K, L, M, N constitute the membrane sector of the complex.

The protein resides in the cell inner membrane. The enzyme catalyses a quinone + NADH + 5 H(+)(in) = a quinol + NAD(+) + 4 H(+)(out). Functionally, NDH-1 shuttles electrons from NADH, via FMN and iron-sulfur (Fe-S) centers, to quinones in the respiratory chain. The immediate electron acceptor for the enzyme in this species is believed to be ubiquinone. Couples the redox reaction to proton translocation (for every two electrons transferred, four hydrogen ions are translocated across the cytoplasmic membrane), and thus conserves the redox energy in a proton gradient. In Paraburkholderia phymatum (strain DSM 17167 / CIP 108236 / LMG 21445 / STM815) (Burkholderia phymatum), this protein is NADH-quinone oxidoreductase subunit A.